The primary structure comprises 438 residues: Putative galacturan 1,4-alpha-galacturonidase A (438 aa).

Residues 1-21 (MRMPSAISIGVFAGLSLAASA) form the signal peptide. N-linked (GlcNAc...) asparagine glycans are attached at residues Asn-28, Asn-102, Asn-111, and Asn-197. PbH1 repeat units lie at residues 186-222 (SSHI…DTYR) and 223-244 (SDHI…AFKG). Residue Asp-237 is the Proton donor of the active site. Asn-245, Asn-253, Asn-279, Asn-325, Asn-353, Asn-372, and Asn-388 each carry an N-linked (GlcNAc...) asparagine glycan. 3 PbH1 repeats span residues 246–266 (STNI…AFGS), 277–303 (VENV…YFKS), and 323–344 (VRNV…YIDT). Cys-397 and Cys-403 are oxidised to a cystine. N-linked (GlcNAc...) asparagine glycosylation occurs at Asn-418.

It belongs to the glycosyl hydrolase 28 family.

It localises to the secreted. The catalysed reaction is [(1-&gt;4)-alpha-D-galacturonosyl](n) + H2O = alpha-D-galacturonate + [(1-&gt;4)-alpha-D-galacturonosyl](n-1). Specific in hydrolyzing the terminal glycosidic bond of polygalacturonic acid and oligogalacturonates. This chain is Putative galacturan 1,4-alpha-galacturonidase A (rgxA), found in Aspergillus niger.